We begin with the raw amino-acid sequence, 69 residues long: MSDIETLKAEIKKLSAKSVNAKMNLHDLSEDLPTNWQSILEVAQETYNTFKTLEDARKKLKELEAGAAA.

It belongs to the UPF0437 family.

This is UPF0437 protein AZC_3451 from Azorhizobium caulinodans (strain ATCC 43989 / DSM 5975 / JCM 20966 / LMG 6465 / NBRC 14845 / NCIMB 13405 / ORS 571).